The following is a 115-amino-acid chain: DNA repair protein homolog YozK (115 aa).

Residues 12-115 (ILCVDMKSFY…EKCVHTYSID (104 aa)) enclose the UmuC domain. Mg(2+) contacts are provided by aspartate 16 and aspartate 115.

This sequence belongs to the DNA polymerase type-Y family. It depends on Mg(2+) as a cofactor.

This Bacillus subtilis (strain 168) protein is DNA repair protein homolog YozK (yozK).